A 209-amino-acid chain; its full sequence is Bacteriorhodopsin (209 aa).

A helical transmembrane segment spans residues 1–17 (LWLGTAGMFLGMLYFIA). Over 18–31 (RGWGETDGRRQKFY) the chain is Cytoplasmic. A helical transmembrane segment spans residues 32-50 (IATILITAIAFVNYLAMAL). Topologically, residues 51 to 66 (GFGLTFIEFGGEQHPI) are extracellular. A helical membrane pass occupies residues 67-84 (YWARYTDWLFTTPLLLYD). At 85–95 (LGLLAGADRNT) the chain is on the cytoplasmic side. The helical transmembrane segment at 96 to 115 (IYSLVSLDVLMIGTGVVATL) threads the bilayer. Over 116–128 (SAGSGVLSAGAER) the chain is Extracellular. A helical transmembrane segment spans residues 129–148 (LVWWGISTAFLLVLLYFLFS). Residues 149–166 (SLSGRVANLPSDTRSTFK) lie on the Cytoplasmic side of the membrane. Residues 167 to 185 (TLRNLVTVVWLVYPVWWLV) form a helical membrane-spanning segment. The Extracellular portion of the chain corresponds to 186–197 (GSEGLGLVGIGI). A helical membrane pass occupies residues 198–209 (ETAGFMVIDLVA).

Belongs to the archaeal/bacterial/fungal opsin family.

It is found in the cell membrane. In terms of biological role, light-driven proton pump. The chain is Bacteriorhodopsin (bop) from Halobacterium halobium (strain shark).